We begin with the raw amino-acid sequence, 387 residues long: Carboxynorspermidine/carboxyspermidine decarboxylase (387 aa).

Position 51 is an N6-(pyridoxal phosphate)lysine (lysine 51). Residues glutamate 248 and aspartate 284 each contribute to the substrate site.

This sequence belongs to the Orn/Lys/Arg decarboxylase class-II family. NspC subfamily. In terms of assembly, homodimer. It depends on pyridoxal 5'-phosphate as a cofactor.

It localises to the cytoplasm. It carries out the reaction carboxynorspermidine + H(+) = norspermidine + CO2. It catalyses the reaction carboxyspermidine + H(+) = spermidine + CO2. Functionally, catalyzes the decarboxylation of carboxynorspermidine and carboxyspermidine. Essential for biofilm formation. This Vibrio cholerae serotype O1 (strain ATCC 39315 / El Tor Inaba N16961) protein is Carboxynorspermidine/carboxyspermidine decarboxylase.